A 307-amino-acid chain; its full sequence is L-lactate dehydrogenase (307 aa).

Residues Val-13, Asp-34, Arg-39, Tyr-64, and Gly-78–Val-79 each bind NAD(+). Arg-87 serves as a coordination point for substrate. Ser-100 is an NAD(+) binding site. Asn-119 to Asp-122 contacts substrate. Thr-142 serves as a coordination point for NAD(+). Position 147-150 (Asp-147–Arg-150) interacts with substrate. The active-site Proton acceptor is His-174. Thr-224 is a substrate binding site.

Belongs to the LDH/MDH superfamily. LDH family. As to quaternary structure, homotetramer.

The protein resides in the cytoplasm. It carries out the reaction (S)-lactate + NAD(+) = pyruvate + NADH + H(+). It functions in the pathway fermentation; pyruvate fermentation to lactate; (S)-lactate from pyruvate: step 1/1. In terms of biological role, catalyzes the conversion of lactate to pyruvate. The chain is L-lactate dehydrogenase from Lactobacillus delbrueckii subsp. bulgaricus (strain ATCC BAA-365 / Lb-18).